The following is a 1081-amino-acid chain: Probable sucrose-phosphate synthase 2 (1081 aa).

Disordered stretches follow at residues 116–152 (EQGR…PRGN), 239–267 (EPTE…EDLG), and 760–780 (IKRQ…GDVP). Residues 256–267 (EPEEEEEEEDLG) show a composition bias toward acidic residues.

It belongs to the glycosyltransferase 1 family. Homodimer or homotetramer.

The enzyme catalyses beta-D-fructose 6-phosphate + UDP-alpha-D-glucose = sucrose 6(F)-phosphate + UDP + H(+). Its pathway is glycan biosynthesis; sucrose biosynthesis; sucrose from D-fructose 6-phosphate and UDP-alpha-D-glucose: step 1/2. Activity is regulated by phosphorylation and moderated by concentration of metabolites and light. In terms of biological role, plays a role in photosynthetic sucrose synthesis by catalyzing the rate-limiting step of sucrose biosynthesis from UDP-glucose and fructose- 6-phosphate. Involved in the regulation of carbon partitioning in the leaves of plants. May regulate the synthesis of sucrose and therefore play a major role as a limiting factor in the export of photoassimilates out of the leaf. Plays a role for sucrose availability that is essential for plant growth and fiber elongation. The chain is Probable sucrose-phosphate synthase 2 (SPS2) from Craterostigma plantagineum (Blue gem).